The chain runs to 98 residues: NADH-ubiquinone oxidoreductase chain 4L (98 aa).

Helical transmembrane passes span M1 to I21, S29 to L49, and I61 to V81.

It belongs to the complex I subunit 4L family. As to quaternary structure, core subunit of respiratory chain NADH dehydrogenase (Complex I) which is composed of 45 different subunits.

It localises to the mitochondrion inner membrane. It carries out the reaction a ubiquinone + NADH + 5 H(+)(in) = a ubiquinol + NAD(+) + 4 H(+)(out). Core subunit of the mitochondrial membrane respiratory chain NADH dehydrogenase (Complex I) which catalyzes electron transfer from NADH through the respiratory chain, using ubiquinone as an electron acceptor. Part of the enzyme membrane arm which is embedded in the lipid bilayer and involved in proton translocation. This is NADH-ubiquinone oxidoreductase chain 4L (MT-ND4L) from Cephalopachus bancanus (Western tarsier).